Consider the following 219-residue polypeptide: Large ribosomal subunit protein uL3 (219 aa).

The segment at 136–156 (GASHGAHRNHRKPGSIGGCAT) is disordered.

The protein belongs to the universal ribosomal protein uL3 family. As to quaternary structure, part of the 50S ribosomal subunit. Forms a cluster with proteins L14 and L19.

In terms of biological role, one of the primary rRNA binding proteins, it binds directly near the 3'-end of the 23S rRNA, where it nucleates assembly of the 50S subunit. The chain is Large ribosomal subunit protein uL3 from Kineococcus radiotolerans (strain ATCC BAA-149 / DSM 14245 / SRS30216).